The following is a 256-amino-acid chain: Thiazole synthase (256 aa).

The active-site Schiff-base intermediate with DXP is Lys95. Residues Gly156, 182–183, and 204–205 each bind 1-deoxy-D-xylulose 5-phosphate; these read AG and NT.

It belongs to the ThiG family. Homotetramer. Forms heterodimers with either ThiH or ThiS.

It is found in the cytoplasm. It carries out the reaction [ThiS sulfur-carrier protein]-C-terminal-Gly-aminoethanethioate + 2-iminoacetate + 1-deoxy-D-xylulose 5-phosphate = [ThiS sulfur-carrier protein]-C-terminal Gly-Gly + 2-[(2R,5Z)-2-carboxy-4-methylthiazol-5(2H)-ylidene]ethyl phosphate + 2 H2O + H(+). Its pathway is cofactor biosynthesis; thiamine diphosphate biosynthesis. In terms of biological role, catalyzes the rearrangement of 1-deoxy-D-xylulose 5-phosphate (DXP) to produce the thiazole phosphate moiety of thiamine. Sulfur is provided by the thiocarboxylate moiety of the carrier protein ThiS. In vitro, sulfur can be provided by H(2)S. This is Thiazole synthase from Escherichia coli (strain 55989 / EAEC).